A 701-amino-acid chain; its full sequence is Polyribonucleotide nucleotidyltransferase (701 aa).

Positions 487 and 493 each coordinate Mg(2+). One can recognise a KH domain in the interval 554 to 613 (PTMIAMKIDTDKIRDVIGKGGATIRAICEETKASIDIEDDGSIKIFGESKEAAEAARQRV). An S1 motif domain is found at 623–691 (GKIYVGKVER…NRGRIKLSIK (69 aa)).

Belongs to the polyribonucleotide nucleotidyltransferase family. As to quaternary structure, component of the RNA degradosome, which is a multiprotein complex involved in RNA processing and mRNA degradation. Requires Mg(2+) as cofactor.

It localises to the cytoplasm. It catalyses the reaction RNA(n+1) + phosphate = RNA(n) + a ribonucleoside 5'-diphosphate. Its function is as follows. Involved in mRNA degradation. Catalyzes the phosphorolysis of single-stranded polyribonucleotides processively in the 3'- to 5'-direction. The polypeptide is Polyribonucleotide nucleotidyltransferase (Pseudomonas savastanoi pv. phaseolicola (strain 1448A / Race 6) (Pseudomonas syringae pv. phaseolicola (strain 1448A / Race 6))).